Consider the following 331-residue polypeptide: Peroxidase 60 (331 aa).

Positions 1–26 (MAVKISTIEVLILSLALLSFGHGCYG) are cleaved as a signal peptide. Cystine bridges form between Cys37/Cys113, Cys70/Cys75, Cys119/Cys321, and Cys198/Cys230. Catalysis depends on His68, which acts as the Proton acceptor. Positions 69, 74, 76, and 78 each coordinate Ca(2+). A substrate-binding site is contributed by Pro161. Heme b is bound at residue His191. A Ca(2+)-binding site is contributed by Thr192. N-linked (GlcNAc...) asparagine glycosylation is present at Asn245. Residues Ser248 and Asp253 each coordinate Ca(2+).

It belongs to the peroxidase family. Classical plant (class III) peroxidase subfamily. Heme b serves as cofactor. It depends on Ca(2+) as a cofactor. Expressed in roots, slightly in leaves.

The protein localises to the secreted. The enzyme catalyses 2 a phenolic donor + H2O2 = 2 a phenolic radical donor + 2 H2O. Removal of H(2)O(2), oxidation of toxic reductants, biosynthesis and degradation of lignin, suberization, auxin catabolism, response to environmental stresses such as wounding, pathogen attack and oxidative stress. These functions might be dependent on each isozyme/isoform in each plant tissue. The chain is Peroxidase 60 (PER60) from Arabidopsis thaliana (Mouse-ear cress).